A 430-amino-acid chain; its full sequence is Glutamate-1-semialdehyde 2,1-aminomutase (430 aa).

Residue K268 is modified to N6-(pyridoxal phosphate)lysine.

It belongs to the class-III pyridoxal-phosphate-dependent aminotransferase family. HemL subfamily. As to quaternary structure, homodimer. The cofactor is pyridoxal 5'-phosphate.

It is found in the cytoplasm. It carries out the reaction (S)-4-amino-5-oxopentanoate = 5-aminolevulinate. It functions in the pathway porphyrin-containing compound metabolism; protoporphyrin-IX biosynthesis; 5-aminolevulinate from L-glutamyl-tRNA(Glu): step 2/2. This chain is Glutamate-1-semialdehyde 2,1-aminomutase (hemL), found in Bacillus subtilis (strain 168).